We begin with the raw amino-acid sequence, 36 residues long: Endoglucanase Cel12A (36 aa).

The protein belongs to the glycosyl hydrolase 12 (cellulase H) family.

It localises to the secreted. Its subcellular location is the extracellular space. It carries out the reaction Endohydrolysis of (1-&gt;4)-beta-D-glucosidic linkages in cellulose, lichenin and cereal beta-D-glucans.. Its function is as follows. Has carboxymethylcellulase activity. This chain is Endoglucanase Cel12A, found in Gloeophyllum trabeum (Brown rot fungus).